Consider the following 475-residue polypeptide: Ribulose bisphosphate carboxylase large chain (475 aa).

Positions 1-2 (MS) are excised as a propeptide. At P3 the chain carries N-acetylproline. At K14 the chain carries N6,N6,N6-trimethyllysine. Substrate is bound by residues N123 and T173. K175 (proton acceptor) is an active-site residue. Residue K177 participates in substrate binding. Residues K201, D203, and E204 each coordinate Mg(2+). K201 is modified (N6-carboxylysine). H294 (proton acceptor) is an active-site residue. 3 residues coordinate substrate: R295, H327, and S379.

The protein belongs to the RuBisCO large chain family. Type I subfamily. In terms of assembly, heterohexadecamer of 8 large chains and 8 small chains; disulfide-linked. The disulfide link is formed within the large subunit homodimers. Mg(2+) serves as cofactor. The disulfide bond which can form in the large chain dimeric partners within the hexadecamer appears to be associated with oxidative stress and protein turnover.

It localises to the plastid. Its subcellular location is the chloroplast. It carries out the reaction 2 (2R)-3-phosphoglycerate + 2 H(+) = D-ribulose 1,5-bisphosphate + CO2 + H2O. The enzyme catalyses D-ribulose 1,5-bisphosphate + O2 = 2-phosphoglycolate + (2R)-3-phosphoglycerate + 2 H(+). In terms of biological role, ruBisCO catalyzes two reactions: the carboxylation of D-ribulose 1,5-bisphosphate, the primary event in carbon dioxide fixation, as well as the oxidative fragmentation of the pentose substrate in the photorespiration process. Both reactions occur simultaneously and in competition at the same active site. The sequence is that of Ribulose bisphosphate carboxylase large chain from Oenothera argillicola (Appalachian evening primrose).